The sequence spans 1231 residues: S-layer protein A (1231 aa).

The N-terminal stretch at 1–35 is a signal peptide; sequence MNKTLGLILTSVFLLSTLGIITGFVIPTQAANSND.

It belongs to the Sulfolobales SlaA family. The mushroom-shaped unit cells of the Sulfolobales' S-layers may consist of three SlaB subunits and six SlaA subunits.

It is found in the secreted. It localises to the cell wall. The protein localises to the S-layer. Functionally, S-layer large protein. May form the highly ordered outer sheath. The polypeptide is S-layer protein A (Saccharolobus solfataricus (strain ATCC 35092 / DSM 1617 / JCM 11322 / P2) (Sulfolobus solfataricus)).